Reading from the N-terminus, the 292-residue chain is DCN1-like protein 4 (292 aa).

Positions 43–83 (HQTGSLRSCSSSDCFNKVMPPRKKRRPASGDDLSAKKSRHD) are disordered. Over residues 45–56 (TGSLRSCSSSDC) the composition is skewed to polar residues. Residue lysine 95 forms a Glycyl lysine isopeptide (Lys-Gly) (interchain with G-Cter in SUMO2) linkage. Residues 101–287 (FSSKRCLEWF…LLDEFVEWYK (187 aa)) form the DCUN1 domain.

As to quaternary structure, interacts (via the DCUN1 domain) with the unneddylated cullins: interacts with CUL1, CUL2, CUL3, CUL4A, CUL4B and CUL5; these interactions promote the cullin neddylation and the identity of the cullin dictates the affinity of the interaction. Interacts with RBX1 and RNF7. Interacts with CAND1; this interaction is bridged by cullins such as CUL3 and strongly inhibits the neddylation of CUL3. These CAND-cullin-DCNL complexes can only be neddylated in the presence of a substrate adapter. Interacts (via DCUN1 domain) with UBE2M (N-terminally acetylated form) and probably with UBE2F (N-terminally acetylated form).

It localises to the nucleus. Contributes to the neddylation of all cullins by transferring NEDD8 from N-terminally acetylated NEDD8-conjugating E2s enzyme to different cullin C-terminal domain-RBX complexes which are necessary for the activation of cullin-RING E3 ubiquitin ligases (CRLs). The polypeptide is DCN1-like protein 4 (Homo sapiens (Human)).